The primary structure comprises 275 residues: Nitrogenase iron protein 1 (275 aa).

An ATP-binding site is contributed by 9–16; sequence GKGGIGKS. Cys-98 contacts [4Fe-4S] cluster. Arg-101 carries the post-translational modification ADP-ribosylarginine; by dinitrogenase reductase ADP-ribosyltransferase. Position 132 (Cys-132) interacts with [4Fe-4S] cluster.

Belongs to the NifH/BchL/ChlL family. In terms of assembly, homodimer. Requires [4Fe-4S] cluster as cofactor. The reversible ADP-ribosylation of Arg-101 inactivates the nitrogenase reductase and regulates nitrogenase activity.

It catalyses the reaction N2 + 8 reduced [2Fe-2S]-[ferredoxin] + 16 ATP + 16 H2O = H2 + 8 oxidized [2Fe-2S]-[ferredoxin] + 2 NH4(+) + 16 ADP + 16 phosphate + 6 H(+). The key enzymatic reactions in nitrogen fixation are catalyzed by the nitrogenase complex, which has 2 components: the iron protein and the molybdenum-iron protein. In Methanobacterium ivanovii, this protein is Nitrogenase iron protein 1 (nifH1).